Reading from the N-terminus, the 240-residue chain is MLCPTYTPSVYHFQTQKPVFRKQRFRVCSSTSGGEDDRFKVEYTPWLIVGLGNPGNKYHGTRHNVGFEMIDVLARKEGVLMNTIQSKALIGIGAIEDVPILLAKPQTYMNFSGESVGSLASHYRVPLRHILMIYDEMALPNGVLRLQPKGGQGYHNGVKSVMGHLDGRRNFPRLSIGIGKPPGNMDMKAFLLQKFSPLEQKQIEEALEQGSEAVKTLVLNGFNQGISRFNLVQKYKFHKV.

It belongs to the PTH family. CRS2 subfamily. Part of large ribonucleo-protein complexes that include group IIB introns and either CAF1 or CAF2.

It localises to the plastid. It is found in the chloroplast stroma. Its function is as follows. Required for the splicing of group IIB introns in chloroplasts. This is Chloroplastic group IIB intron splicing facilitator CRS2-B, chloroplastic (CRS2B) from Arabidopsis thaliana (Mouse-ear cress).